Consider the following 392-residue polypeptide: Probable protein phosphatase 2C 22 (392 aa).

The disordered stretch occupies residues 1–26 (MEETRGISDPENGSSSYGGKPPNPLS). Positions 89 to 356 (RSGAWSDIGS…DNVTAVVVCL (268 aa)) constitute a PPM-type phosphatase domain. The Mn(2+) site is built by Asp133, Gly134, Asp304, and Asp347.

It belongs to the PP2C family. Mg(2+) is required as a cofactor. Requires Mn(2+) as cofactor.

The catalysed reaction is O-phospho-L-seryl-[protein] + H2O = L-seryl-[protein] + phosphate. The enzyme catalyses O-phospho-L-threonyl-[protein] + H2O = L-threonyl-[protein] + phosphate. The protein is Probable protein phosphatase 2C 22 of Arabidopsis thaliana (Mouse-ear cress).